A 269-amino-acid chain; its full sequence is 4-hydroxy-tetrahydrodipicolinate reductase (269 aa).

Residues 10–15 and Glu36 contribute to the NAD(+) site; that span reads GSSGRM. Arg37 contacts NADP(+). NAD(+)-binding positions include 99 to 101 and 123 to 126; these read GTT and APNM. Residue His156 is the Proton donor/acceptor of the active site. His157 is a binding site for (S)-2,3,4,5-tetrahydrodipicolinate. The active-site Proton donor is Lys160. 166–167 provides a ligand contact to (S)-2,3,4,5-tetrahydrodipicolinate; sequence GT.

It belongs to the DapB family.

The protein resides in the cytoplasm. It catalyses the reaction (S)-2,3,4,5-tetrahydrodipicolinate + NAD(+) + H2O = (2S,4S)-4-hydroxy-2,3,4,5-tetrahydrodipicolinate + NADH + H(+). The enzyme catalyses (S)-2,3,4,5-tetrahydrodipicolinate + NADP(+) + H2O = (2S,4S)-4-hydroxy-2,3,4,5-tetrahydrodipicolinate + NADPH + H(+). The protein operates within amino-acid biosynthesis; L-lysine biosynthesis via DAP pathway; (S)-tetrahydrodipicolinate from L-aspartate: step 4/4. Its function is as follows. Catalyzes the conversion of 4-hydroxy-tetrahydrodipicolinate (HTPA) to tetrahydrodipicolinate. This Nitrosospira multiformis (strain ATCC 25196 / NCIMB 11849 / C 71) protein is 4-hydroxy-tetrahydrodipicolinate reductase.